We begin with the raw amino-acid sequence, 694 residues long: Elongation factor G (694 aa).

Positions 12–286 constitute a tr-type G domain; that stretch reads SKLRNIGIMA…AVVDYLPSPI (275 aa). GTP contacts are provided by residues 21–28, 85–89, and 139–142; these read AHIDAGKT, DTPGH, and NKMD.

The protein belongs to the TRAFAC class translation factor GTPase superfamily. Classic translation factor GTPase family. EF-G/EF-2 subfamily.

The protein resides in the cytoplasm. Functionally, catalyzes the GTP-dependent ribosomal translocation step during translation elongation. During this step, the ribosome changes from the pre-translocational (PRE) to the post-translocational (POST) state as the newly formed A-site-bound peptidyl-tRNA and P-site-bound deacylated tRNA move to the P and E sites, respectively. Catalyzes the coordinated movement of the two tRNA molecules, the mRNA and conformational changes in the ribosome. This Pseudothermotoga lettingae (strain ATCC BAA-301 / DSM 14385 / NBRC 107922 / TMO) (Thermotoga lettingae) protein is Elongation factor G.